The following is a 472-amino-acid chain: L-fuculokinase (472 aa).

This sequence belongs to the FGGY kinase family. Requires a divalent metal cation as cofactor.

It carries out the reaction L-fuculose + ATP = L-fuculose 1-phosphate + ADP + H(+). The protein operates within carbohydrate degradation; L-fucose degradation; L-lactaldehyde and glycerone phosphate from L-fucose: step 2/3. In terms of biological role, catalyzes the phosphorylation of L-fuculose. This Salmonella typhi protein is L-fuculokinase.